Consider the following 552-residue polypeptide: Chaperonin GroEL (552 aa).

ATP contacts are provided by residues 30-33 (TLGP), K51, 87-91 (DGTTT), G415, 480-482 (NAA), and D496.

The protein belongs to the chaperonin (HSP60) family. As to quaternary structure, forms a cylinder of 14 subunits composed of two heptameric rings stacked back-to-back. Interacts with the co-chaperonin GroES.

The protein resides in the cytoplasm. It carries out the reaction ATP + H2O + a folded polypeptide = ADP + phosphate + an unfolded polypeptide.. In terms of biological role, together with its co-chaperonin GroES, plays an essential role in assisting protein folding. The GroEL-GroES system forms a nano-cage that allows encapsulation of the non-native substrate proteins and provides a physical environment optimized to promote and accelerate protein folding. The chain is Chaperonin GroEL from Verminephrobacter eiseniae (strain EF01-2).